A 283-amino-acid polypeptide reads, in one-letter code: RNase adapter protein RapZ (283 aa).

8–15 (GRSGSGKS) is a binding site for ATP. 56–59 (DVRN) lines the GTP pocket. The RNA-binding stretch occupies residues 266–283 (RSRGKNVQSRHRTLEKRK).

This sequence belongs to the RapZ-like family. RapZ subfamily. In terms of assembly, homotrimer.

In terms of biological role, modulates the synthesis of GlmS, by affecting the processing and stability of the regulatory small RNA GlmZ. When glucosamine-6-phosphate (GlcN6P) concentrations are high in the cell, RapZ binds GlmZ and targets it to cleavage by RNase E. Consequently, GlmZ is inactivated and unable to activate GlmS synthesis. Under low GlcN6P concentrations, RapZ is sequestered and inactivated by an other regulatory small RNA, GlmY, preventing GlmZ degradation and leading to synthesis of GlmS. In Photorhabdus laumondii subsp. laumondii (strain DSM 15139 / CIP 105565 / TT01) (Photorhabdus luminescens subsp. laumondii), this protein is RNase adapter protein RapZ.